The chain runs to 102 residues: MEIKQIAVAGSLESSDMMITISPNDGQGIVLELDSSVEKQFGNHIRALIKTTLANLGVESATIEAVDKGALDCTIQARTIAAVHRAAGVEHYNWKEIDSWNA.

Position 14 is an O-(phosphoribosyl dephospho-coenzyme A)serine (serine 14).

The protein belongs to the CitD family. As to quaternary structure, oligomer with a subunit composition of (alpha,beta,gamma)6.

It is found in the cytoplasm. In terms of biological role, covalent carrier of the coenzyme of citrate lyase. The polypeptide is Citrate lyase acyl carrier protein (Streptococcus equi subsp. zooepidemicus (strain H70)).